Consider the following 82-residue polypeptide: UPF0213 protein SSP2268 (82 aa).

The GIY-YIG domain maps to 2-77; that stretch reads DKHYIYIVKC…KTFSRQKKLK (76 aa).

It belongs to the UPF0213 family.

The polypeptide is UPF0213 protein SSP2268 (Staphylococcus saprophyticus subsp. saprophyticus (strain ATCC 15305 / DSM 20229 / NCIMB 8711 / NCTC 7292 / S-41)).